Here is a 61-residue protein sequence, read N- to C-terminus: Neurotoxin-like protein 1 (61 aa).

Cystine bridges form between Cys-3-Cys-24, Cys-17-Cys-38, Cys-42-Cys-53, and Cys-54-Cys-59.

Expressed by the venom gland.

It localises to the secreted. The chain is Neurotoxin-like protein 1 from Causus rhombeatus (Rhombic night adder).